Consider the following 78-residue polypeptide: Exodeoxyribonuclease 7 small subunit (78 aa).

Belongs to the XseB family. In terms of assembly, heterooligomer composed of large and small subunits.

The protein localises to the cytoplasm. It catalyses the reaction Exonucleolytic cleavage in either 5'- to 3'- or 3'- to 5'-direction to yield nucleoside 5'-phosphates.. Bidirectionally degrades single-stranded DNA into large acid-insoluble oligonucleotides, which are then degraded further into small acid-soluble oligonucleotides. This chain is Exodeoxyribonuclease 7 small subunit, found in Mycobacterium leprae (strain TN).